The primary structure comprises 154 residues: 6,7-dimethyl-8-ribityllumazine synthase (154 aa).

Residues W22, 56-58, and 80-82 each bind 5-amino-6-(D-ribitylamino)uracil; these read AWE and CVV. Residue 85–86 coordinates (2S)-2-hydroxy-3-oxobutyl phosphate; that stretch reads DT. The active-site Proton donor is H88. A 5-amino-6-(D-ribitylamino)uracil-binding site is contributed by N113. R127 is a (2S)-2-hydroxy-3-oxobutyl phosphate binding site.

This sequence belongs to the DMRL synthase family. As to quaternary structure, forms an icosahedral capsid composed of 60 subunits, arranged as a dodecamer of pentamers.

It carries out the reaction (2S)-2-hydroxy-3-oxobutyl phosphate + 5-amino-6-(D-ribitylamino)uracil = 6,7-dimethyl-8-(1-D-ribityl)lumazine + phosphate + 2 H2O + H(+). It functions in the pathway cofactor biosynthesis; riboflavin biosynthesis; riboflavin from 2-hydroxy-3-oxobutyl phosphate and 5-amino-6-(D-ribitylamino)uracil: step 1/2. In terms of biological role, catalyzes the formation of 6,7-dimethyl-8-ribityllumazine by condensation of 5-amino-6-(D-ribitylamino)uracil with 3,4-dihydroxy-2-butanone 4-phosphate. This is the penultimate step in the biosynthesis of riboflavin. The sequence is that of 6,7-dimethyl-8-ribityllumazine synthase from Xylella fastidiosa (strain M23).